The following is a 471-amino-acid chain: F-box only protein 3 (471 aa).

The 47-residue stretch at Pro10–His56 folds into the F-box domain. In terms of domain architecture, ApaG spans Val278 to Val408. Acidic residues predominate over residues Glu419–Glu451. The interval Glu419–Arg455 is disordered.

In terms of assembly, part of a SCF (SKP1-cullin-F-box) protein ligase complex SCF(FBXO3) consisting of FBXO3, SKP1, CUL1 and RBX1. Interacts with PML, interaction is direct and takes place either alone or within the SCF complex. As to quaternary structure, (Microbial infection) Interacts (via ApaG domain) with Rift valley fever virus NSs helical filament; this interaction forms a filamentous E3 which mediates degradation of TFIIH complex through interaction with GT2H1.

The protein resides in the nucleus. It functions in the pathway protein modification; protein ubiquitination. Functionally, substrate recognition component of the SCF (SKP1-CUL1-F-box protein)-type E3 ubiquitin ligase complex, SCF(FBXO3), which mediates the ubiquitination and subsequent proteasomal degradation of target proteins. Mediates the ubiquitination of HIPK2 and probably that of EP300, leading to rapid degradation by the proteasome. In the presence of PML, HIPK2 ubiquitination still occurs, but degradation is prevented. PML, HIPK2 and FBXO3 may act synergically to activate p53/TP53-dependent transactivation. The SCF(FBXO3) also acts as a regulator of inflammation by mediating ubiquitination and degradation of FBXL2 in response to lipopolysaccharide (LPS). The SCF(FBXO3) complex specifically recognizes FBXL2 phosphorylated at 'Thr-404' and promotes its ubiquitination. (Microbial infection) Associates with the Rift valley fever virus NSs to form a remodeled E3 ligase that triggers efficient proteasomal degradation of targeted proteins. The filamentous E3 ligase targets the TFIIH complex leading to robust inhibition of antiviral immunity and enhances viral pathogenesis. The polypeptide is F-box only protein 3 (Homo sapiens (Human)).